We begin with the raw amino-acid sequence, 525 residues long: Ubiquitin carboxyl-terminal hydrolase 22 (525 aa).

The segment at 21-138 (PGCSHLGSFK…KEEQRKAWKM (118 aa)) adopts a UBP-type zinc-finger fold. Residues Cys23, His25, Cys63, Cys66, Cys76, Cys79, Cys84, His89, His93, His99, Cys112, and Cys115 each contribute to the Zn(2+) site. Residue Lys129 is modified to N6-acetyllysine. Thr147 is modified (phosphothreonine; by CDK1). Residues 176 to 520 (RGLINLGNTC…EGYLLFYHKQ (345 aa)) enclose the USP domain. The Nucleophile role is filled by Cys185. Ser237 is subject to Phosphoserine; by CDK1. His479 (proton acceptor) is an active-site residue.

This sequence belongs to the peptidase C19 family. UBP8 subfamily. As to quaternary structure, component of some SAGA transcription coactivator-HAT complexes, at least composed of ATXN7, ATXN7L3, ENY2, GCN5L2, SUPT3H, TAF10, TRRAP and USP22. Within the SAGA complex, ATXN7L3, ENY2 and USP22 form a subcomplex required for histone deubiquitination. Interacts directly with ATXN7L3; leading to its recruitment to the SAGA complex. Interacts with ATXN7L3 and weakly with ATXN7L3B. Interacts with MED1. Post-translationally, phosphorylated in G2/M phase, but not in G1 phase by CDK1. In terms of processing, ubiquitinated and subsequently degraded in a CDC20-dependent manner. As to expression, moderately expressed in various tissues including heart and skeletal muscle, and weakly expressed in lung and liver.

It localises to the nucleus. Its subcellular location is the cytoplasm. It carries out the reaction Thiol-dependent hydrolysis of ester, thioester, amide, peptide and isopeptide bonds formed by the C-terminal Gly of ubiquitin (a 76-residue protein attached to proteins as an intracellular targeting signal).. Functionally, deubiquitinase that plays a role in several cellular processes including transcriptional regulation, cell cycle progression or innate immunity. As part of the transcription regulatory histone acetylation (HAT) complex SAGA, catalyzes the deubiquitination of both histones H2A and H2B, thereby acting as a transcriptional coactivator. Recruited to specific gene promoters by activators such as MYC, where it is required for transcription. Facilitates cell-cycle progression by stabilizing CCNB1 and antagonizing its proteasome-mediated degradation in a cell cycle-specific manner. Modulates cell cycle progression and apoptosis also by antagonizing TP53 transcriptional activation through deacetylase SIRT1 stabilization. Plays multiple roles in immunity and inflammation. Participates in antiviral response by deubiquitinating the importin KPNA2, leading to IRF3 nuclear translocation and subsequent type I interferon production. Acts as a central regulator of type III IFN signaling by negatively regulating STING1 activation and ubiquitination. Inhibits NLRP3 inflammasome activation by promoting NLRP3 degradation through ATG5-dependent autophagy. Deubiquitinates CD274 to induce its stabilization and thereby participates in maintenance of immune tolerance to self. Controls necroptotic cell death by regulating RIPK3 phosphorylation and ubiquitination. During bacterial infection, promotes pro-inflammatory response by targeting TRAF6 and removing its 'Lys-48'-linked polyubiquitination. This Homo sapiens (Human) protein is Ubiquitin carboxyl-terminal hydrolase 22 (USP22).